The sequence spans 540 residues: Phosphatidylinositol 4-phosphate 5-kinase type-1 beta (540 aa).

Positions 1 to 23 (MSSVTENGDVTAGKPNEEKTYKK) are disordered. Positions 25–395 (TSSAIKGAIQ…RFLKFMNTRV (371 aa)) constitute a PIPK domain.

It is found in the cytoplasm. The protein localises to the cytosol. The protein resides in the cell membrane. Its subcellular location is the endomembrane system. It carries out the reaction a 1,2-diacyl-sn-glycero-3-phospho-(1D-myo-inositol 4-phosphate) + ATP = a 1,2-diacyl-sn-glycero-3-phospho-(1D-myo-inositol-4,5-bisphosphate) + ADP + H(+). It catalyses the reaction 1-octadecanoyl-2-(5Z,8Z,11Z,14Z)-eicosatetraenoyl-sn-glycero-3-phospho-1D-myo-inositol 4-phosphate + ATP = 1-octadecanoyl-2-(5Z,8Z,11Z,14Z)-eicosatetraenoyl-sn-glycero-3-phospho-1D-myo-inositol 4,5-bisphosphate + ADP + H(+). The enzyme catalyses 1-octadecanoyl-2-(9Z)-octadecenoyl-sn-glycero-3-phospho-1D-myo-inositol 4-phosphate + ATP = 1-octadecanoyl-2-(9Z)-octadecenoyl-sn-glycero-3-phospho-1D-myo-inositol 4,5-bisphosphate + ADP + H(+). The catalysed reaction is 1-octadecanoyl-2-(9Z)-octadecenoyl-sn-glycero-3-phospho-1D-myo-inositol + ATP = 1-octadecanoyl-2-(9Z)-octadecenoyl-sn-glycero-3-phospho-1D-myo-inositol 5-phosphate + ADP + H(+). It carries out the reaction 1-octadecanoyl-2-(9Z,12Z)-octadecadienoyl-sn-glycero-3-phospho-1D-myo-inositol + ATP = 1-octadecanoyl-2-(9Z,12Z)-octadecadienoyl-sn-glycero-3-phospho-1D-myo-inositol 5-phosphate + ADP + H(+). It catalyses the reaction 1-octadecanoyl-2-(5Z,8Z,11Z,14Z-eicosatetraenoyl)-sn-glycero-3-phospho-(1D-myo-inositol) + ATP = 1-octadecanoyl-2-(5Z,8Z,11Z,14Z)-eicosatetraenoyl-sn-glycero-3-phospho-1D-myo-inositol 5-phosphate + ADP + H(+). The enzyme catalyses 1,2-di-(9Z,12Z)-octadecadienoyl-sn-glycero-3-phospho-1D-myo-inositol + ATP = 1,2-di(9Z,12Z)-octadecadienoyl-sn-glycero-3-phospho-1D-myo-inositol 5-phosphate + ADP + H(+). Catalyzes the phosphorylation of phosphatidylinositol 4-phosphate (PtdIns(4)P/PI4P) to form phosphatidylinositol 4,5-bisphosphate (PtdIns(4,5)P2/PIP2), a lipid second messenger that regulates several cellular processes such as signal transduction, vesicle trafficking, actin cytoskeleton dynamics, cell adhesion, and cell motility. PtdIns(4,5)P2 can directly act as a second messenger or can be utilized as a precursor to generate other second messengers: inositol 1,4,5-trisphosphate (IP3), diacylglycerol (DAG) or phosphatidylinositol-3,4,5-trisphosphate (PtdIns(3,4,5)P3/PIP3). The sequence is that of Phosphatidylinositol 4-phosphate 5-kinase type-1 beta (PIP5K1B) from Gallus gallus (Chicken).